A 381-amino-acid chain; its full sequence is Cytochrome b (381 aa).

The next 4 membrane-spanning stretches (helical) occupy residues F34–M54, W78–I99, W114–L134, and F179–L199. The heme b site is built by H84 and H98. Heme b-binding residues include H183 and H197. H202 contributes to the a ubiquinone binding site. A run of 4 helical transmembrane segments spans residues Y227–M247, L289–H309, M321–G341, and F348–P368.

Belongs to the cytochrome b family. The cytochrome bc1 complex contains 3 respiratory subunits (MT-CYB, CYC1 and UQCRFS1), 2 core proteins (UQCRC1 and UQCRC2) and probably 6 low-molecular weight proteins. Requires heme b as cofactor.

Its subcellular location is the mitochondrion inner membrane. Functionally, component of the ubiquinol-cytochrome c reductase complex (complex III or cytochrome b-c1 complex) that is part of the mitochondrial respiratory chain. The b-c1 complex mediates electron transfer from ubiquinol to cytochrome c. Contributes to the generation of a proton gradient across the mitochondrial membrane that is then used for ATP synthesis. The chain is Cytochrome b (mt-cyb) from Prionace glauca (Blue shark).